Consider the following 268-residue polypeptide: Cell division coordinator CpoB (268 aa).

The first 21 residues, 1–21 (MRMCRRVVTVLALSLPLAAWA), serve as a signal peptide directing secretion. Residues 58 to 94 (QLFMQLQQMQDQLSRQQGIIEELQNDVSRMKQENLER) adopt a coiled-coil conformation. Residues 104–146 (SGAAPAATPDNSSGGGASNAAPDAAAGAAAQQPAGSSQPGDPA) are disordered. Over residues 121-143 (SNAAPDAAAGAAAQQPAGSSQPG) the composition is skewed to low complexity. TPR repeat units follow at residues 149–181 (KLYY…YPNS), 185–218 (GNAQ…YPKH), and 222–255 (PDSL…YPGT).

Belongs to the CpoB family.

It is found in the periplasm. Mediates coordination of peptidoglycan synthesis and outer membrane constriction during cell division. The protein is Cell division coordinator CpoB of Pseudomonas putida (strain ATCC 47054 / DSM 6125 / CFBP 8728 / NCIMB 11950 / KT2440).